We begin with the raw amino-acid sequence, 422 residues long: uncharacterized protein (422 aa).

Disordered regions lie at residues M1–D21, T158–V218, and D246–T271. A compositionally biased stretch (polar residues) spans A11 to D21. Positions S170–A199 are enriched in low complexity. 2 stretches are compositionally biased toward polar residues: residues G205–E216 and A250–G261. Low complexity predominate over residues T262–T271.

The protein belongs to the adhesin P1 family.

This is an uncharacterized protein from Mycoplasma pneumoniae (strain ATCC 29342 / M129 / Subtype 1) (Mycoplasmoides pneumoniae).